The chain runs to 537 residues: Cytochrome P450 86A8 (537 aa).

A helical transmembrane segment spans residues 3 to 23 (ISTALMILSAITAYFLWLTFI). Cys458 is a heme binding site.

It belongs to the cytochrome P450 family. The cofactor is heme. Expressed in leaves, stems, flowers and siliques. Expressed at low levels in roots.

It localises to the membrane. It catalyses the reaction an organic molecule + reduced [NADPH--hemoprotein reductase] + O2 = an alcohol + oxidized [NADPH--hemoprotein reductase] + H2O + H(+). Functionally, catalyzes the omega-hydroxylation of various fatty acids (FA). Acts on saturated and unsaturated fatty acids with chain lengths from C12 to C18. May be involved in the biosynthesis of cutin in the epidermis which prevents post-genital organ fusions. Hydroxylated FAs may be important for trichome differentiation, establishment of apical dominance and senescence. The sequence is that of Cytochrome P450 86A8 (CYP86A8) from Arabidopsis thaliana (Mouse-ear cress).